A 148-amino-acid polypeptide reads, in one-letter code: Thioredoxin H8 (148 aa).

The region spanning 1 to 145 is the Thioredoxin domain; the sequence is MGANVSTPDQ…LERKLNKYTQ (145 aa). Residues Cys-71 and Cys-74 each act as nucleophile in the active site. A disulfide bridge links Cys-71 with Cys-74.

It belongs to the thioredoxin family. Plant H-type subfamily.

The protein resides in the cytoplasm. In terms of biological role, probable thiol-disulfide oxidoreductase that may be involved in the redox regulation of a number of cytosolic enzymes. The protein is Thioredoxin H8 (TRX8) of Arabidopsis thaliana (Mouse-ear cress).